Consider the following 305-residue polypeptide: Myb-like transcriptional regulator basR (305 aa).

Myb-like domains follow at residues 5 to 59, 60 to 110, and 111 to 162; these read RRRW…YNRF, TGGL…HHCL, and NPEL…TILS. A disordered region spans residues 175–215; the sequence is PCCDSPSPSKSSRRPPSTPTSTPQVPGSRQGSSYDPYDYGS. Over residues 198 to 207 the composition is skewed to polar residues; the sequence is QVPGSRQGSS.

The protein resides in the nucleus. Functionally, transcription regulator that acts as a central regulatory node for the integration of external bacterial signals leading to the regulation of secondary metabolite gene clusters such as orsellinic, lecanoric acid, cichorine, 2,4-dihydroxy-3-methyl-6-(2-oxopropyl)benzaldehyde (dba), emericellamide or microperfuranone clusters. The polypeptide is Myb-like transcriptional regulator basR (Emericella nidulans (strain FGSC A4 / ATCC 38163 / CBS 112.46 / NRRL 194 / M139) (Aspergillus nidulans)).